A 340-amino-acid chain; its full sequence is MKALVKREASKGIWLEQVPVPTPGPNEVLIKLEKTAICGTDLHIYLWDEWSQRTITPGLTIGHEFVGRVAELGSAVTGYQVGQRVSAEGHIVCGHCRNCRGGRPHLCPNTVGIGVNVNGAFAEYMVMPASNLWPIPDQIPSELAAFFDPYGNAAHCALEFDVIGEDVLITGAGPIGIIAAGICKHIGARNVVVTDVNDFRLKLAADLGATRVVNVSKTSLKDVMADLHMEGFDVGLEMSGNPRAFNDMLDCMYHGGKIAMLGIMPRGAGCDWDKIIFKGLTVQGIYGRKMYETWYKMTQLVLSGFPLQKVLTHQLSIDEFQKGFDLMEEGKAGKVVLSWN.

Cys38 contacts Zn(2+). Residues Thr40 and His43 each act as charge relay system in the active site. Positions 63, 64, 93, 96, 99, and 107 each coordinate Zn(2+). NAD(+) is bound by residues Ile175, Asp195, Arg200, 261 to 263, and 285 to 286; these read LGI and IY.

This sequence belongs to the zinc-containing alcohol dehydrogenase family. As to quaternary structure, homotetramer. Requires Zn(2+) as cofactor.

The protein localises to the cytoplasm. The catalysed reaction is L-threonine + NAD(+) = (2S)-2-amino-3-oxobutanoate + NADH + H(+). It participates in amino-acid degradation; L-threonine degradation via oxydo-reductase pathway; glycine from L-threonine: step 1/2. In terms of biological role, catalyzes the NAD(+)-dependent oxidation of L-threonine to 2-amino-3-ketobutyrate. This chain is L-threonine 3-dehydrogenase, found in Xanthomonas campestris pv. campestris (strain ATCC 33913 / DSM 3586 / NCPPB 528 / LMG 568 / P 25).